Consider the following 67-residue polypeptide: MMSTLVVLLTICLLMLPLTARQLDADQLADQLAERMEDISADQNRWFDPVKRCCMRPICMCPCCVNG.

Positions 1–20 (MMSTLVVLLTICLLMLPLTA) are cleaved as a signal peptide. The propeptide occupies 21 to 52 (RQLDADQLADQLAERMEDISADQNRWFDPVKR). 3 cysteine pairs are disulfide-bonded: C53–C63, C54–C61, and C59–C64.

It belongs to the conotoxin M superfamily. In terms of tissue distribution, expressed by the venom duct.

It localises to the secreted. Its function is as follows. Probable neurotoxin. In Conus imperialis (Imperial cone), this protein is Conotoxin Im3.1.